Consider the following 195-residue polypeptide: Antigenic thaumatin-like protein ARB_01183 (195 aa).

The N-terminal stretch at 1 to 22 (MHSNTAVIALSALAALVPAALA) is a signal peptide. 2 disulfides stabilise this stretch: cysteine 125–cysteine 153 and cysteine 130–cysteine 137. The disordered stretch occupies residues 171-195 (GPKKMFKPVQEKAANRPRHPHARPE). The segment covering 185–195 (NRPRHPHARPE) has biased composition (basic residues).

Belongs to the thaumatin family.

It is found in the secreted. Functionally, might be involved in the inhibition of growth of fungal competitors and pathogenicity. This Arthroderma benhamiae (strain ATCC MYA-4681 / CBS 112371) (Trichophyton mentagrophytes) protein is Antigenic thaumatin-like protein ARB_01183.